The chain runs to 233 residues: Large ribosomal subunit protein uL1 (233 aa).

It belongs to the universal ribosomal protein uL1 family. In terms of assembly, part of the 50S ribosomal subunit.

Binds directly to 23S rRNA. The L1 stalk is quite mobile in the ribosome, and is involved in E site tRNA release. Functionally, protein L1 is also a translational repressor protein, it controls the translation of the L11 operon by binding to its mRNA. In Campylobacter curvus (strain 525.92), this protein is Large ribosomal subunit protein uL1.